The following is a 522-amino-acid chain: DEP domain-containing protein 7 (522 aa).

Positions 46-138 (LYTQVEVKKR…SSCSLYRFLN (93 aa)) constitute a DEP domain.

The protein belongs to the DEPDC7 family.

This Xenopus laevis (African clawed frog) protein is DEP domain-containing protein 7 (depdc7).